The primary structure comprises 559 residues: AP-4 complex accessory subunit tepsin (559 aa).

An ENTH domain is found at 2-135 (LDRLAFLQQL…FSESIPSPSH (134 aa)). 3 disordered regions span residues 131–157 (PSPSHTVSAKERSQSGMGSQASSAPAL), 214–290 (AIPS…ESLD), and 472–491 (PNGAANQKNPNGSTEKSDPA). 2 stretches are compositionally biased toward low complexity: residues 144-154 (QSGMGSQASSA) and 266-281 (SRSSDVGSKSGSDGQS). Over residues 472 to 485 (PNGAANQKNPNGST) the composition is skewed to polar residues.

It localises to the golgi apparatus. It is found in the trans-Golgi network membrane. The protein resides in the cytoplasmic vesicle. The protein localises to the cytoplasm. Its subcellular location is the cytosol. Its function is as follows. May play a role in vesicular trafficking of proteins at the trans-Golgi network. This Xenopus laevis (African clawed frog) protein is AP-4 complex accessory subunit tepsin.